The following is a 62-amino-acid chain: Glucagon (62 aa).

It belongs to the glucagon family.

It is found in the secreted. Promotes hydrolysis of glycogen and lipids, and raises the blood sugar level. This is Glucagon (gcg) from Scyliorhinus canicula (Small-spotted catshark).